A 90-amino-acid polypeptide reads, in one-letter code: uncharacterized protein (90 aa).

Positions 25–90 are disordered; that stretch reads GEAAYNSPTN…PPIAPPPILD (66 aa). Polar residues-rich tracts occupy residues 30 to 54 and 65 to 79; these read NSPT…TESV and NDQT…SNVN.

This is an uncharacterized protein from Bacillus subtilis (strain 168).